Consider the following 160-residue polypeptide: Ubiquitin-like protein ATG12 (160 aa).

The tract at residues 1–40 is disordered; it reads MSETPKDQGPSSPSPSPSPSAASPMPLADNEVAGSGASSP. Gly160 participates in a covalent cross-link: Glycyl lysine isopeptide (Gly-Lys) (interchain with K-102 in ATG5).

This sequence belongs to the ATG12 family. Forms a conjugate with ATG5. Forms a thioester bond with the 'Cys-196' of ATG10. Interacts with the ATG7 C-terminal 40 amino acids domain. The ATG12-ATG5 conjugate forms a complex with several units of ATG16. The ATG12-ATG5 conjugate also associates with ATG3.

Its subcellular location is the preautophagosomal structure membrane. Its function is as follows. Ubiquitin-like protein involved in cytoplasm to vacuole transport (Cvt), autophagy vesicles formation, mitophagy, and nucleophagy. Conjugation with ATG5 through a ubiquitin-like conjugating system involving also ATG7 as an E1-like activating enzyme and ATG10 as an E2-like conjugating enzyme, is essential for its function. The ATG12-ATG5 conjugate acts as an E3-like enzyme which is required for lipidation of ATG8 and ATG8 association to the vesicle membranes. ATG12-ATG5 rearranges the ATG3 catalytic center and enhances its E2 activity. Autophagy is required for proper vegetative growth, asexual/sexual reproduction, and full virulence. Autophagy is particularly involved in the biosynthesis of deoxynivalenol (DON), an important virulence determinant. This chain is Ubiquitin-like protein ATG12, found in Gibberella zeae (strain ATCC MYA-4620 / CBS 123657 / FGSC 9075 / NRRL 31084 / PH-1) (Wheat head blight fungus).